A 228-amino-acid chain; its full sequence is Lipoprotein-releasing system ATP-binding protein LolD (228 aa).

Residues 5–228 (LRCHQVCKTY…DGLLTDITGA (224 aa)) form the ABC transporter domain. Position 41–48 (41–48 (GSSGSGKS)) interacts with ATP.

It belongs to the ABC transporter superfamily. Lipoprotein translocase (TC 3.A.1.125) family. As to quaternary structure, the complex is composed of two ATP-binding proteins (LolD) and two transmembrane proteins (LolC and LolE).

Its subcellular location is the cell inner membrane. Its function is as follows. Part of the ABC transporter complex LolCDE involved in the translocation of mature outer membrane-directed lipoproteins, from the inner membrane to the periplasmic chaperone, LolA. Responsible for the formation of the LolA-lipoprotein complex in an ATP-dependent manner. The polypeptide is Lipoprotein-releasing system ATP-binding protein LolD (Vibrio cholerae serotype O1 (strain ATCC 39315 / El Tor Inaba N16961)).